We begin with the raw amino-acid sequence, 297 residues long: Formamidopyrimidine-DNA glycosylase (297 aa).

Proline 2 functions as the Schiff-base intermediate with DNA in the catalytic mechanism. Glutamate 3 acts as the Proton donor in catalysis. Lysine 58 (proton donor; for beta-elimination activity) is an active-site residue. DNA contacts are provided by histidine 106, arginine 133, and arginine 178. An FPG-type zinc finger spans residues 263 to 297 (FVYDRAGEPCRICGTPIRQILQGQRSTFYCPHCQH). The Proton donor; for delta-elimination activity role is filled by arginine 287.

Belongs to the FPG family. As to quaternary structure, monomer. Requires Zn(2+) as cofactor.

It catalyses the reaction Hydrolysis of DNA containing ring-opened 7-methylguanine residues, releasing 2,6-diamino-4-hydroxy-5-(N-methyl)formamidopyrimidine.. It carries out the reaction 2'-deoxyribonucleotide-(2'-deoxyribose 5'-phosphate)-2'-deoxyribonucleotide-DNA = a 3'-end 2'-deoxyribonucleotide-(2,3-dehydro-2,3-deoxyribose 5'-phosphate)-DNA + a 5'-end 5'-phospho-2'-deoxyribonucleoside-DNA + H(+). Involved in base excision repair of DNA damaged by oxidation or by mutagenic agents. Acts as a DNA glycosylase that recognizes and removes damaged bases. Has a preference for oxidized purines, such as 7,8-dihydro-8-oxoguanine (8-oxoG). Has AP (apurinic/apyrimidinic) lyase activity and introduces nicks in the DNA strand. Cleaves the DNA backbone by beta-delta elimination to generate a single-strand break at the site of the removed base with both 3'- and 5'-phosphates. This chain is Formamidopyrimidine-DNA glycosylase, found in Cupriavidus metallidurans (strain ATCC 43123 / DSM 2839 / NBRC 102507 / CH34) (Ralstonia metallidurans).